The chain runs to 1178 residues: Pesticidal crystal protein Cry1Ac (1178 aa).

This sequence belongs to the delta endotoxin family.

Promotes colloidosmotic lysis by binding to the midgut epithelial cells of many lepidopteran larvae. In Bacillus thuringiensis subsp. kurstaki, this protein is Pesticidal crystal protein Cry1Ac (cry1Ac).